Reading from the N-terminus, the 311-residue chain is Endosome-associated-trafficking regulator 1 (311 aa).

The stretch at 167–278 (RGNAENGTKN…KSENERLRLG (112 aa)) forms a coiled coil.

It belongs to the ENTR1 family.

It is found in the cytoplasm. The protein resides in the early endosome. The protein localises to the endosome. Its subcellular location is the recycling endosome. It localises to the midbody. It is found in the cytoskeleton. The protein resides in the microtubule organizing center. The protein localises to the centrosome. Its subcellular location is the cilium basal body. In terms of biological role, endosome-associated protein that plays a role in membrane receptor sorting, cytokinesis and ciliogenesis. The polypeptide is Endosome-associated-trafficking regulator 1 (Danio rerio (Zebrafish)).